The sequence spans 213 residues: Orotate phosphoribosyltransferase (213 aa).

Residue K26 coordinates 5-phospho-alpha-D-ribose 1-diphosphate. 34–35 (FF) contacts orotate. 5-phospho-alpha-D-ribose 1-diphosphate-binding positions include 72-73 (YK), R98, K99, K102, and 123-131 (DDVISAGTS). Orotate-binding residues include S127 and R155.

The protein belongs to the purine/pyrimidine phosphoribosyltransferase family. PyrE subfamily. Homodimer. Requires Mg(2+) as cofactor.

The enzyme catalyses orotidine 5'-phosphate + diphosphate = orotate + 5-phospho-alpha-D-ribose 1-diphosphate. It participates in pyrimidine metabolism; UMP biosynthesis via de novo pathway; UMP from orotate: step 1/2. In terms of biological role, catalyzes the transfer of a ribosyl phosphate group from 5-phosphoribose 1-diphosphate to orotate, leading to the formation of orotidine monophosphate (OMP). This chain is Orotate phosphoribosyltransferase, found in Neisseria gonorrhoeae (strain ATCC 700825 / FA 1090).